Here is a 588-residue protein sequence, read N- to C-terminus: Arginine--tRNA ligase (588 aa).

Residues 124–134 carry the 'HIGH' region motif; sequence PNVAKPMHVGH.

Belongs to the class-I aminoacyl-tRNA synthetase family. Monomer.

It is found in the cytoplasm. It catalyses the reaction tRNA(Arg) + L-arginine + ATP = L-arginyl-tRNA(Arg) + AMP + diphosphate. This Maricaulis maris (strain MCS10) (Caulobacter maris) protein is Arginine--tRNA ligase.